Reading from the N-terminus, the 338-residue chain is Arginine N-succinyltransferase subunit alpha (338 aa).

The protein belongs to the succinylarginine dihydrolase family. Heterotetramer of two alpha and two beta subunits.

The catalysed reaction is succinyl-CoA + L-arginine = N(2)-succinyl-L-arginine + CoA + H(+). The protein operates within amino-acid degradation; L-arginine degradation via AST pathway; L-glutamate and succinate from L-arginine: step 1/5. Catalyzes the transfer of succinyl-CoA to arginine to produce N(2)-succinylarginine. Also acts on L-ornithine. This chain is Arginine N-succinyltransferase subunit alpha (astA), found in Pseudomonas aeruginosa (strain ATCC 15692 / DSM 22644 / CIP 104116 / JCM 14847 / LMG 12228 / 1C / PRS 101 / PAO1).